Here is a 390-residue protein sequence, read N- to C-terminus: GTPase Obg (390 aa).

Positions 1–159 (MKFIDESLIR…RDLLLELMLL (159 aa)) constitute an Obg domain. Residues 160-333 (ADVGMLGLPN…LCRDIMDFII (174 aa)) enclose the OBG-type G domain. Residues 166–173 (GLPNAGKS), 191–195 (FTTLV), 213–216 (DIPG), 283–286 (NKID), and 314–316 (SAA) each bind GTP. The Mg(2+) site is built by Ser173 and Thr193.

Belongs to the TRAFAC class OBG-HflX-like GTPase superfamily. OBG GTPase family. In terms of assembly, monomer. Requires Mg(2+) as cofactor.

The protein resides in the cytoplasm. Its function is as follows. An essential GTPase which binds GTP, GDP and possibly (p)ppGpp with moderate affinity, with high nucleotide exchange rates and a fairly low GTP hydrolysis rate. Plays a role in control of the cell cycle, stress response, ribosome biogenesis and in those bacteria that undergo differentiation, in morphogenesis control. In Haemophilus influenzae (strain 86-028NP), this protein is GTPase Obg.